The sequence spans 384 residues: PqqA peptide cyclase (384 aa).

In terms of domain architecture, Radical SAM core spans 5-220 (VGLPLWLLAE…TNEYREKLKA (216 aa)). The [4Fe-4S] cluster site is built by C19, C23, and C26.

This sequence belongs to the radical SAM superfamily. PqqE family. In terms of assembly, interacts with PqqD. The interaction is necessary for activity of PqqE. The cofactor is [4Fe-4S] cluster.

It catalyses the reaction [PQQ precursor protein] + S-adenosyl-L-methionine = E-Y cross-linked-[PQQ precursor protein] + 5'-deoxyadenosine + L-methionine + H(+). The protein operates within cofactor biosynthesis; pyrroloquinoline quinone biosynthesis. Functionally, catalyzes the cross-linking of a glutamate residue and a tyrosine residue in the PqqA protein as part of the biosynthesis of pyrroloquinoline quinone (PQQ). In Acinetobacter calcoaceticus, this protein is PqqA peptide cyclase (pqqE).